The following is a 422-amino-acid chain: Enolase (422 aa).

Ser-41 provides a ligand contact to Mg(2+). (2R)-2-phosphoglycerate is bound at residue Glu-163. Residue Glu-204 is the Proton donor of the active site. Residues Asp-241, Glu-284, and Asp-311 each contribute to the Mg(2+) site. The active-site Proton acceptor is the Lys-336. Residues Arg-365, Ser-366, and Lys-387 each contribute to the (2R)-2-phosphoglycerate site.

The protein belongs to the enolase family. Homodimer. Component of the RNA degradosome, a multiprotein complex involved in RNA processing and mRNA degradation. It depends on Mg(2+) as a cofactor.

It is found in the cytoplasm. It localises to the secreted. Its subcellular location is the cell surface. The catalysed reaction is (2R)-2-phosphoglycerate = phosphoenolpyruvate + H2O. The protein operates within carbohydrate degradation; glycolysis; pyruvate from D-glyceraldehyde 3-phosphate: step 4/5. In terms of biological role, catalyzes the reversible conversion of 2-phosphoglycerate (2-PG) into phosphoenolpyruvate (PEP). It is essential for the degradation of carbohydrates via glycolysis. This is Enolase from Legionella pneumophila subsp. pneumophila (strain Philadelphia 1 / ATCC 33152 / DSM 7513).